We begin with the raw amino-acid sequence, 645 residues long: 1-deoxy-D-xylulose-5-phosphate synthase 1 (645 aa).

Residues 1–20 are disordered; that stretch reads MTDTKTPTLDRVAGPADLRS. Residues His78 and 119–121 contribute to the thiamine diphosphate site; that span reads AHS. Asp150 contributes to the Mg(2+) binding site. Residues 151 to 152, Asn179, Tyr291, and Glu373 contribute to the thiamine diphosphate site; that span reads GS. Residue Asn179 coordinates Mg(2+).

This sequence belongs to the transketolase family. DXPS subfamily. In terms of assembly, homodimer. It depends on Mg(2+) as a cofactor. Thiamine diphosphate is required as a cofactor.

The enzyme catalyses D-glyceraldehyde 3-phosphate + pyruvate + H(+) = 1-deoxy-D-xylulose 5-phosphate + CO2. Its pathway is metabolic intermediate biosynthesis; 1-deoxy-D-xylulose 5-phosphate biosynthesis; 1-deoxy-D-xylulose 5-phosphate from D-glyceraldehyde 3-phosphate and pyruvate: step 1/1. Its function is as follows. Catalyzes the acyloin condensation reaction between C atoms 2 and 3 of pyruvate and glyceraldehyde 3-phosphate to yield 1-deoxy-D-xylulose-5-phosphate (DXP). The polypeptide is 1-deoxy-D-xylulose-5-phosphate synthase 1 (Roseobacter denitrificans (strain ATCC 33942 / OCh 114) (Erythrobacter sp. (strain OCh 114))).